We begin with the raw amino-acid sequence, 582 residues long: tRNA(Ile)-lysidine synthase (582 aa).

ATP is bound at residue 46–51; it reads SGGADS. A CMP/dCMP-type deaminase domain is found at 402–525; it reads DPLHAAMGEA…DLLADHWGWR (124 aa). The interval 548–582 is disordered; it reads VRRRSADTPQTPNAETPAPRSSRSTSASGKPTMLE. Residues 563 to 575 show a composition bias toward low complexity; sequence TPAPRSSRSTSAS.

It belongs to the tRNA(Ile)-lysidine synthase family.

The protein resides in the cytoplasm. The enzyme catalyses cytidine(34) in tRNA(Ile2) + L-lysine + ATP = lysidine(34) in tRNA(Ile2) + AMP + diphosphate + H(+). Ligates lysine onto the cytidine present at position 34 of the AUA codon-specific tRNA(Ile) that contains the anticodon CAU, in an ATP-dependent manner. Cytidine is converted to lysidine, thus changing the amino acid specificity of the tRNA from methionine to isoleucine. The protein is tRNA(Ile)-lysidine synthase of Deinococcus radiodurans (strain ATCC 13939 / DSM 20539 / JCM 16871 / CCUG 27074 / LMG 4051 / NBRC 15346 / NCIMB 9279 / VKM B-1422 / R1).